We begin with the raw amino-acid sequence, 272 residues long: MSCHNCSDPQVLCSSGQLFLQPLWDHLRSWEALLQSPFFPVIFSITTYVGFCLPFVVLDILCSWVPALRRYKIHPDFSPSAQQLLPCLGQTLYQHVMFVFPVTLLHWARSPALLPHEAPELLLLLHHILFCLLLFDMEFFVWHLLHHKVPWLYRTFHKVHHQNSSSFALATQYMSVWELFSLGFFDMMNVTLLGCHPLTTLTFHVVNIWLSVEDHSGYNFPWSTHRLVPFGWYGGVVHHDLHHSHFNCNFAPYFTHWDKILGTLRTASVPAR.

Residue Asn5 is glycosylated (N-linked (GlcNAc...) asparagine). The next 3 membrane-spanning stretches (helical) occupy residues 38–58 (FFPVIFSITTYVGFCLPFVVL), 84–104 (LLPCLGQTLYQHVMFVFPVTL), and 121–141 (LLLLLHHILFCLLLFDMEFFV). One can recognise a Fatty acid hydroxylase domain in the interval 129–263 (LFCLLLFDME…FTHWDKILGT (135 aa)). Residues 142 to 146 (WHLLH) carry the Histidine box-1 motif. Residues 157–161 (HKVHH) carry the Histidine box-2 motif. Residues Asn163 and Asn189 are each glycosylated (N-linked (GlcNAc...) asparagine). The Histidine box-3 signature appears at 238–244 (HHDLHHS).

This sequence belongs to the sterol desaturase family. It depends on Fe cation as a cofactor. Post-translationally, N-glycosylated.

The protein resides in the endoplasmic reticulum membrane. It carries out the reaction cholesterol + AH2 + O2 = 25-hydroxycholesterol + A + H2O. The enzyme catalyses cholesterol + NADPH + O2 + H(+) = 25-hydroxycholesterol + NADP(+) + H2O. Functionally, catalyzes the formation of 25-hydroxycholesterol from cholesterol, leading to repress cholesterol biosynthetic enzymes. Plays a key role in cell positioning and movement in lymphoid tissues: 25-hydroxycholesterol is an intermediate in biosynthesis of 7-alpha,25-dihydroxycholesterol (7-alpha,25-OHC), an oxysterol that acts as a ligand for the G protein-coupled receptor GPR183/EBI2, a chemotactic receptor for a number of lymphoid cells. May play an important role in regulating lipid metabolism by synthesizing a corepressor that blocks sterol regulatory element binding protein (SREBP) processing. As an interferon-stimulated gene, has broad antiviral activities against a wide range of enveloped viruses, such as vesicular stomatitis virus (VSV) and SARS coronavirus-2 (SARS-CoV-2). Its product, 25-hydroxycholesterol, activates the ER-localized enzyme ACAT to induce internalization of accessible cholesterol on the plasma membrane and restricts SARS-CoV-2 S protein-mediated fusion which inhibits virus replication. In testis, production of 25-hydroxycholesterol by macrophages plays a role in Leydig cell differentiation. Required to restrain inflammation in macrophages: production of 25-hydroxycholesterol protects macrophages from cholesterol overload, thereby preventing mitochondrial DNA release and subsequent activation of the AIM2 inflammasome. This chain is Cholesterol 25-hydroxylase, found in Homo sapiens (Human).